The chain runs to 120 residues: Aspartate 1-decarboxylase (120 aa).

S25 acts as the Schiff-base intermediate with substrate; via pyruvic acid in catalysis. At S25 the chain carries Pyruvic acid (Ser). Position 57 (T57) interacts with substrate. The active-site Proton donor is Y58. Residue 73–75 (GAA) participates in substrate binding.

It belongs to the PanD family. As to quaternary structure, heterooctamer of four alpha and four beta subunits. The cofactor is pyruvate. Post-translationally, is synthesized initially as an inactive proenzyme, which is activated by self-cleavage at a specific serine bond to produce a beta-subunit with a hydroxyl group at its C-terminus and an alpha-subunit with a pyruvoyl group at its N-terminus.

The protein resides in the cytoplasm. The catalysed reaction is L-aspartate + H(+) = beta-alanine + CO2. It participates in cofactor biosynthesis; (R)-pantothenate biosynthesis; beta-alanine from L-aspartate: step 1/1. Its function is as follows. Catalyzes the pyruvoyl-dependent decarboxylation of aspartate to produce beta-alanine. In Deinococcus deserti (strain DSM 17065 / CIP 109153 / LMG 22923 / VCD115), this protein is Aspartate 1-decarboxylase.